The primary structure comprises 475 residues: Ribulose bisphosphate carboxylase large chain (475 aa).

A propeptide spanning residues 1–2 is cleaved from the precursor; it reads MS. Pro3 carries the N-acetylproline modification. Position 14 is an N6,N6,N6-trimethyllysine (Lys14). Substrate contacts are provided by Asn123 and Thr173. Catalysis depends on Lys175, which acts as the Proton acceptor. Lys177 serves as a coordination point for substrate. 3 residues coordinate Mg(2+): Lys201, Asp203, and Glu204. Lys201 carries the N6-carboxylysine modification. Residue His294 is the Proton acceptor of the active site. Substrate is bound by residues Arg295, His327, and Ser379.

It belongs to the RuBisCO large chain family. Type I subfamily. In terms of assembly, heterohexadecamer of 8 large chains and 8 small chains; disulfide-linked. The disulfide link is formed within the large subunit homodimers. Mg(2+) serves as cofactor. The disulfide bond which can form in the large chain dimeric partners within the hexadecamer appears to be associated with oxidative stress and protein turnover.

The protein localises to the plastid. It localises to the chloroplast. It carries out the reaction 2 (2R)-3-phosphoglycerate + 2 H(+) = D-ribulose 1,5-bisphosphate + CO2 + H2O. The enzyme catalyses D-ribulose 1,5-bisphosphate + O2 = 2-phosphoglycolate + (2R)-3-phosphoglycerate + 2 H(+). In terms of biological role, ruBisCO catalyzes two reactions: the carboxylation of D-ribulose 1,5-bisphosphate, the primary event in carbon dioxide fixation, as well as the oxidative fragmentation of the pentose substrate in the photorespiration process. Both reactions occur simultaneously and in competition at the same active site. In Picea abies (Norway spruce), this protein is Ribulose bisphosphate carboxylase large chain.